Consider the following 159-residue polypeptide: MQIDIIAPGRVKERYLRDAIDEYSKRLSRYCKLNIIEVADEKTPDHASEGVDRQIKAREGERIAKHLKDGAFVIALAINGKQLSSEELAAKINDLGLRGTSHIQLVIGGSIGLDDAILRRADFLLSFSKMTFPHQLMRVILLEQIYRAYKINAGEPYHK.

S-adenosyl-L-methionine is bound by residues Leu76, Gly108, and 127–132 (FSKMTF).

Belongs to the RNA methyltransferase RlmH family. As to quaternary structure, homodimer.

It localises to the cytoplasm. The catalysed reaction is pseudouridine(1915) in 23S rRNA + S-adenosyl-L-methionine = N(3)-methylpseudouridine(1915) in 23S rRNA + S-adenosyl-L-homocysteine + H(+). Specifically methylates the pseudouridine at position 1915 (m3Psi1915) in 23S rRNA. The sequence is that of Ribosomal RNA large subunit methyltransferase H from Bifidobacterium longum (strain DJO10A).